A 468-amino-acid chain; its full sequence is Neurexin-1-beta (468 aa).

An N-terminal signal peptide occupies residues 1–46 (MYQRMLRCGAELGSPGGGSSGGAGGRLALLWIVPLTLSGLLGVAWG). The Extracellular portion of the chain corresponds to 47-391 (ASSLGAHHIH…AEVIRESSST (345 aa)). The Laminin G-like domain occupies 87–285 (YIFSKGGGQI…DANIAIVGNV (199 aa)). Ca(2+) is bound by residues Asp137 and Val154. Asn184 carries N-linked (GlcNAc...) asparagine glycosylation. Positions 201-230 (GNNDNERLAIARQRIPYRLGRVVDEWLLDK) are essential for interaction with CBLN1; modulates interaction affinity with NLGN1, NLGN2 and NLGN3; prevents interaction with DAG1/alpha-dystroglycan; modulates interaction with alpha-latrotoxin. Ca(2+) contacts are provided by Ile236 and Asn238. Ser346 carries O-linked (Xyl...) (heparan sulfate) serine glycosylation. A disordered region spans residues 350–381 (PSDDEDIDPCEPSSGGLANPTRVGGREPYPGS). A helical membrane pass occupies residues 392–414 (TGMVVGIVAAAALCILILLYAMY). Topologically, residues 415 to 468 (KYRNRDEGSYHVDESRNYISNSAQSNGAVVKEKQPSSAKSANKNKKNKDKEYYV) are cytoplasmic. Residues 435–468 (NSAQSNGAVVKEKQPSSAKSANKNKKNKDKEYYV) form a disordered region. A phosphoserine mark is found at Ser450, Ser451, and Ser454.

This sequence belongs to the neurexin family. In terms of assembly, the cytoplasmic C-terminal region binds to CASK. Binds NLGN1, NLGN2 and NLGN3, DAG1 (alpha-dystroglycan) and alpha-latrotoxin. Binding to neuroligins is calcium-dependent, and the binding preference ranks as follow: NLGN1 &gt; NLGN4 &gt;&gt; NLGN3 &gt; NLGN2. Interacts with CBLN2 and more weakly with CBLN4. Interacts with CBLN1; interaction is CBLN1 hexamer form-dependent; CBLN1-binding is calcium-independent; isoform 1b does not interact with CBLN1. Interacts with CLSTN3. N-glycosylated. In terms of processing, O-glycosylated; contains heparan sulfate. Heparan sulfate attachment is required for synapse development by mediating interactions with neuroligins. As to expression, brain.

It localises to the presynaptic cell membrane. Neuronal cell surface protein involved in cell recognition and cell adhesion by forming intracellular junctions through binding to neuroligins. Plays a role in formation of synaptic junctions. Functions as part of a trans-synaptic complex by binding to cerebellins and postsynaptic GRID1. This interaction helps regulate the activity of NMDA and AMPA receptors at hippocampal synapses without affecting synapse formation. NRXN1B-CBLN2-GRID1 complex transduce presynaptic signals into postsynaptic NMDAR response. The chain is Neurexin-1-beta from Rattus norvegicus (Rat).